Here is a 326-residue protein sequence, read N- to C-terminus: MSQYIVCALYKFVSLEDYTEIRQPLTQVMEDNQIRGTLLLASEGINGTVAGSRKAIDTLLTWFKEDSRLADVVYKESINDVQPFNRTKVKLKKEIVTMGVEGIDPLHVVGTYVKPADWNALISDPDVLLVDTRNDYEVDIGTFKYAVNPKTETFRDFPQYVAENLDPAKHKKVAMFCTGGIRCEKSTAYMKEQGFDEVYHLEGGILKYLEEVPEENSLWEGDCYVFDGRVAVNHQLEKSHYDVCNACRLPITDEDKQSDSFEKGVSCPKCIDQHTEEQKSRFREREKQVQLANERGETHVGGDAAKLIEQRKQEKKEKKQQQRSSK.

Residues 123–217 (SDPDVLLVDT…YLEEVPEENS (95 aa)) enclose the Rhodanese domain. The Cysteine persulfide intermediate role is filled by C177. Residues 276 to 320 (EEQKSRFREREKQVQLANERGETHVGGDAAKLIEQRKQEKKEKKQ) show a composition bias toward basic and acidic residues. Residues 276-326 (EEQKSRFREREKQVQLANERGETHVGGDAAKLIEQRKQEKKEKKQQQRSSK) are disordered.

The protein belongs to the TrhO family.

It catalyses the reaction uridine(34) in tRNA + AH2 + O2 = 5-hydroxyuridine(34) in tRNA + A + H2O. In terms of biological role, catalyzes oxygen-dependent 5-hydroxyuridine (ho5U) modification at position 34 in tRNAs. This chain is tRNA uridine(34) hydroxylase, found in Aliivibrio salmonicida (strain LFI1238) (Vibrio salmonicida (strain LFI1238)).